The chain runs to 430 residues: Asparagine--tRNA ligase (430 aa).

The protein belongs to the class-II aminoacyl-tRNA synthetase family. As to quaternary structure, homodimer.

It is found in the cytoplasm. The catalysed reaction is tRNA(Asn) + L-asparagine + ATP = L-asparaginyl-tRNA(Asn) + AMP + diphosphate + H(+). In Pelotomaculum thermopropionicum (strain DSM 13744 / JCM 10971 / SI), this protein is Asparagine--tRNA ligase.